We begin with the raw amino-acid sequence, 251 residues long: E3 ubiquitin-protein ligase MARCHF3 (251 aa).

The RING-CH-type zinc-finger motif lies at 61 to 121 (QSFNDRPMCR…ELCHFRFSVE (61 aa)). Zn(2+) contacts are provided by C69, C72, C85, C87, H95, C98, C111, and C114. Helical transmembrane passes span 143-163 (LFGD…SGWL) and 180-200 (AVGL…WTLV).

It localises to the cytoplasmic vesicle membrane. The protein localises to the early endosome membrane. It carries out the reaction S-ubiquitinyl-[E2 ubiquitin-conjugating enzyme]-L-cysteine + [acceptor protein]-L-lysine = [E2 ubiquitin-conjugating enzyme]-L-cysteine + N(6)-ubiquitinyl-[acceptor protein]-L-lysine.. Its pathway is protein modification; protein ubiquitination. Its function is as follows. E3 ubiquitin-protein ligase which may be involved in endosomal trafficking. E3 ubiquitin ligases accept ubiquitin from an E2 ubiquitin-conjugating enzyme in the form of a thioester and then directly transfer the ubiquitin to targeted substrates. In Xenopus tropicalis (Western clawed frog), this protein is E3 ubiquitin-protein ligase MARCHF3 (marchf3).